The sequence spans 583 residues: Thiol:disulfide interchange protein DsbD (583 aa).

A signal peptide spans M1–A18. Cystine bridges form between C118-C124 and C186-C306. 8 helical membrane passes run G168–L188, S214–G234, W245–F265, L289–A309, F326–V346, W359–L379, V382–C402, and L413–V433. Residues V458 to E581 form the Thioredoxin domain. C496 and C499 are disulfide-bonded.

Belongs to the thioredoxin family. DsbD subfamily.

It is found in the cell inner membrane. It catalyses the reaction [protein]-dithiol + NAD(+) = [protein]-disulfide + NADH + H(+). The catalysed reaction is [protein]-dithiol + NADP(+) = [protein]-disulfide + NADPH + H(+). Its function is as follows. Required to facilitate the formation of correct disulfide bonds in some periplasmic proteins and for the assembly of the periplasmic c-type cytochromes. Acts by transferring electrons from cytoplasmic thioredoxin to the periplasm. This transfer involves a cascade of disulfide bond formation and reduction steps. This Pseudomonas fluorescens (strain ATCC BAA-477 / NRRL B-23932 / Pf-5) protein is Thiol:disulfide interchange protein DsbD.